Reading from the N-terminus, the 349-residue chain is uncharacterized protein (349 aa).

Positions 51 to 160 (NIIKENKNNL…QDESYISIFQ (110 aa)) constitute a THUMP domain.

This is an uncharacterized protein from Methanocaldococcus jannaschii (strain ATCC 43067 / DSM 2661 / JAL-1 / JCM 10045 / NBRC 100440) (Methanococcus jannaschii).